The following is a 151-amino-acid chain: Cell division protein SepF (151 aa).

Over residues 17 to 29 (DNEDDYQDQEDEQ) the composition is skewed to acidic residues. A disordered region spans residues 17–42 (DNEDDYQDQEDEQAQQPAPEQPVDNH).

It belongs to the SepF family. Homodimer. Interacts with FtsZ.

It is found in the cytoplasm. Its function is as follows. Cell division protein that is part of the divisome complex and is recruited early to the Z-ring. Probably stimulates Z-ring formation, perhaps through the cross-linking of FtsZ protofilaments. Its function overlaps with FtsA. In Lacticaseibacillus casei (strain BL23) (Lactobacillus casei), this protein is Cell division protein SepF.